Consider the following 187-residue polypeptide: Elongation factor P (187 aa).

The protein belongs to the elongation factor P family.

It localises to the cytoplasm. It functions in the pathway protein biosynthesis; polypeptide chain elongation. Its function is as follows. Involved in peptide bond synthesis. Stimulates efficient translation and peptide-bond synthesis on native or reconstituted 70S ribosomes in vitro. Probably functions indirectly by altering the affinity of the ribosome for aminoacyl-tRNA, thus increasing their reactivity as acceptors for peptidyl transferase. The sequence is that of Elongation factor P from Bifidobacterium animalis subsp. lactis (strain AD011).